Reading from the N-terminus, the 244-residue chain is Carbonyl reductase [NADPH] 2 (244 aa).

11–39 (LVTGAGKGIGRDTVKALHVSGARVVAVTR) lines the NADP(+) pocket. Ser136 contributes to the substrate binding site. Tyr149 serves as the catalytic Proton acceptor. At Ser176 the chain carries Phosphoserine.

This sequence belongs to the short-chain dehydrogenases/reductases (SDR) family. Homotetramer. In terms of tissue distribution, lung (ciliated cells, non-ciliated bronchiolar cells and type-II alveolar pneumocytes). Low expression in all extrapulmonary tissues, including adipose tissue.

Its subcellular location is the mitochondrion matrix. The enzyme catalyses a secondary alcohol + NADP(+) = a ketone + NADPH + H(+). Its activity is regulated as follows. Allosteric enzyme exhibiting negative cooperativity. Activated 2-5 fold by fatty acids. Its function is as follows. May function in the pulmonary metabolism of endogenous carbonyl compounds, such as aliphatic aldehydes and ketones derived from lipid peroxidation, 3-ketosteroids and fatty aldehydes, as well as in xenobiotic metabolism. The chain is Carbonyl reductase [NADPH] 2 (CBR2) from Sus scrofa (Pig).